The following is a 382-amino-acid chain: Mannitol-1-phosphate 5-dehydrogenase (382 aa).

Residue 3 to 14 (ALHFGAGNIGRG) coordinates NAD(+).

Belongs to the mannitol dehydrogenase family.

The enzyme catalyses D-mannitol 1-phosphate + NAD(+) = beta-D-fructose 6-phosphate + NADH + H(+). This is Mannitol-1-phosphate 5-dehydrogenase from Erwinia tasmaniensis (strain DSM 17950 / CFBP 7177 / CIP 109463 / NCPPB 4357 / Et1/99).